The following is a 240-amino-acid chain: MSAYPQDTYFNSNPYQQQPYAYQPPPQPQPQQPPYQQQPYQQQAYQYNAQQPYQTTDPYAYQQSPPQSSTVPPQSPPVQVTHSPFIRTDSSQAVSFTDMARMAGRPQTFDEMYSVPESFLEIEIRNPMTHGIGRKMYTDYEIVCMTNIPAFKLRHSAVRRRYSDFEAFRDILERESTRVNIPPLPGKVFTNRFSDEVIEQRREGLQRFLEIVAGHPLLQTGSKVLCAFLQDPAWDKSQWI.

Positions 1–85 (MSAYPQDTYF…PPVQVTHSPF (85 aa)) are disordered. Over residues 22–33 (YQPPPQPQPQQP) the composition is skewed to pro residues. Composition is skewed to low complexity over residues 34-54 (PYQQ…QPYQ) and 62-84 (QQSP…THSP). The PX domain occupies 118–235 (SFLEIEIRNP…CAFLQDPAWD (118 aa)). A 1,2-diacyl-sn-glycero-3-phospho-(1D-myo-inositol-3-phosphate)-binding residues include Arg161, Ser163, Lys187, Arg192, and Arg201.

This sequence belongs to the sorting nexin family.

It is found in the cytoplasm. It localises to the golgi apparatus membrane. The protein localises to the prevacuolar compartment membrane. Required for retention of late Golgi membrane proteins. Component of the retrieval machinery that functions by direct interaction with the cytosolic tails of certain TGN membrane proteins during the sorting/budding process at the prevacuolar compartment. Binds phosphatidylinositol 3-phosphate (PtdIns(P3)). In Cryptococcus neoformans var. neoformans serotype D (strain JEC21 / ATCC MYA-565) (Filobasidiella neoformans), this protein is Sorting nexin-3 (SNX3).